The primary structure comprises 141 residues: Hemoglobin subunit alpha (141 aa).

Positions 1–141 (VLSAADKTAI…VATALGSHYR (141 aa)) constitute a Globin domain. H59 contributes to the O2 binding site. Residue H88 participates in heme b binding.

This sequence belongs to the globin family. In terms of assembly, heterotetramer of two alpha chains and two beta chains. In terms of tissue distribution, red blood cells.

Involved in oxygen transport from the lung to the various peripheral tissues. This chain is Hemoglobin subunit alpha (HBA), found in Squalus acanthias (Spiny dogfish).